A 150-amino-acid polypeptide reads, in one-letter code: MIRVIMLLVLVWMTPMISWATEVVKDVSGQKVEVNADQLKRGKRLFNTHCSACHVGGITKTNPNIGLDLESLSLATPARNNLDALVDYMKNPTTYDGSESIAQIHPSIASSDIFPKMRDLSEDDLYAIASHILTQAQIQAEKWGGGKIYY.

Positions 1–20 are cleaved as a signal peptide; sequence MIRVIMLLVLVWMTPMISWA. Residues Cys-50, Cys-53, His-54, and His-105 each coordinate heme c.

Belongs to the cytochrome c family. PsbV subfamily. PSII is composed of 1 copy each of membrane proteins PsbA, PsbB, PsbC, PsbD, PsbE, PsbF, PsbH, PsbI, PsbJ, PsbK, PsbL, PsbM, PsbT, PsbY, PsbZ, Psb30/Ycf12, at least 3 peripheral proteins of the oxygen-evolving complex and a large number of cofactors. It forms dimeric complexes. The extrinsic subunits in red algae are PsbO (OEC33), PsbQ', cytochrome c-550 and PsbU. Heme c serves as cofactor.

The protein localises to the plastid. Its subcellular location is the chloroplast thylakoid membrane. Its function is as follows. One of the extrinsic, lumenal subunits of photosystem II (PSII). PSII is a light-driven water plastoquinone oxidoreductase, using light energy to abstract electrons from H(2)O, generating a proton gradient subsequently used for ATP formation. The extrinsic proteins stabilize the structure of photosystem II oxygen-evolving complex (OEC), the ion environment of oxygen evolution and protect the OEC against heat-induced inactivation. The sequence is that of Photosystem II extrinsic protein V from Cyanidioschyzon merolae (strain NIES-3377 / 10D) (Unicellular red alga).